Consider the following 143-residue polypeptide: Peptide methionine sulfoxide reductase MsrB (143 aa).

Positions 16 to 139 (DAELRRRLTP…NSAALNFESR (124 aa)) constitute a MsrB domain. 4 residues coordinate Zn(2+): cysteine 55, cysteine 58, cysteine 104, and cysteine 107. Cysteine 128 acts as the Nucleophile in catalysis.

Belongs to the MsrB Met sulfoxide reductase family. Zn(2+) is required as a cofactor.

It carries out the reaction L-methionyl-[protein] + [thioredoxin]-disulfide + H2O = L-methionyl-(R)-S-oxide-[protein] + [thioredoxin]-dithiol. The sequence is that of Peptide methionine sulfoxide reductase MsrB from Burkholderia cenocepacia (strain ATCC BAA-245 / DSM 16553 / LMG 16656 / NCTC 13227 / J2315 / CF5610) (Burkholderia cepacia (strain J2315)).